The chain runs to 365 residues: DNA replication and repair protein RecF (365 aa).

30-37 (GQNGSGKT) is an ATP binding site.

The protein belongs to the RecF family.

Its subcellular location is the cytoplasm. In terms of biological role, the RecF protein is involved in DNA metabolism; it is required for DNA replication and normal SOS inducibility. RecF binds preferentially to single-stranded, linear DNA. It also seems to bind ATP. The sequence is that of DNA replication and repair protein RecF from Shewanella woodyi (strain ATCC 51908 / MS32).